The chain runs to 147 residues: Lectin-like protein BA14k (147 aa).

A signal peptide spans Met-1–Ala-26. Residues Gly-80–Gln-100 traverse the membrane as a helical segment.

Belongs to the BA14k family.

It localises to the cell membrane. Has immunoglobulin-binding and hemagglutination properties, and can bind to mannose. Essential for virulence. May be involved in LPS biosynthesis or polysaccharide transport. The polypeptide is Lectin-like protein BA14k (Brucella abortus (strain S19)).